We begin with the raw amino-acid sequence, 237 residues long: Lectin alpha chain (237 aa).

Mn(2+)-binding residues include Glu-8 and Asp-10. Asp-10, Tyr-12, Asn-14, and Asp-19 together coordinate Ca(2+). Residue Tyr-12 coordinates a carbohydrate. 3 residues coordinate Mn(2+): Asp-19, His-24, and Ser-34. 99 to 100 lines the a carbohydrate pocket; the sequence is LY. Asp-208 is a Ca(2+) binding site. Arg-228 is a binding site for a carbohydrate.

This sequence belongs to the leguminous lectin family. As to quaternary structure, homotetramer. The beta and gamma chains are produced by partial proteolytic processing of the lectin alpha chain by an asparaginyl endopeptidase. Mixture of 60% alpha lectin and 40% of its beta and gamma proteolytic fragments.

Its function is as follows. D-mannose/D-glucose-binding lectin. Has anti-inflammatory activity in rats. Induces histamine release in mast cells from rat. Induces lymphocyte proliferation and IFNG production. Shows toxicity against the aquatic snail B.glabrata at concentrations higher than 50 ug/ml. This Dioclea grandiflora (Mucana) protein is Lectin alpha chain.